Consider the following 989-residue polypeptide: Translation initiation factor IF-2 (989 aa).

2 disordered regions span residues 28 to 60 (GVTK…TDAD) and 97 to 397 (VRRD…DQNT). Composition is skewed to basic and acidic residues over residues 40 to 60 (ETDK…TDAD) and 122 to 178 (ELQR…EAAK). The segment covering 182–223 (AAAAEAAAREQQTQASKPAQAAQPAAAKAEPVAAKAAEPVVA) has biased composition (low complexity). The segment covering 231–280 (ERAAAERAAQREAAKKAEDAARQAAEKARAEQEEIAKRRAAAEAEARAIR) has biased composition (basic and acidic residues). Residues 318-345 (RPAGEAPARPAAKKPAAAAPAATTTPSA) are compositionally biased toward low complexity. Residues 374–387 (TSGGVDRGWRGGPK) show a composition bias toward gly residues. One can recognise a tr-type G domain in the interval 489–658 (PRPPVVTVMG…LLQAEVLELK (170 aa)). Residues 498–505 (GHVDHGKT) are G1. Position 498-505 (498-505 (GHVDHGKT)) interacts with GTP. Residues 523–527 (GITQH) are G2. Positions 544-547 (DTPG) are G3. GTP-binding positions include 544–548 (DTPGH) and 598–601 (NKID). Residues 598–601 (NKID) form a G4 region. Positions 634–636 (SAK) are G5.

This sequence belongs to the TRAFAC class translation factor GTPase superfamily. Classic translation factor GTPase family. IF-2 subfamily.

It localises to the cytoplasm. One of the essential components for the initiation of protein synthesis. Protects formylmethionyl-tRNA from spontaneous hydrolysis and promotes its binding to the 30S ribosomal subunits. Also involved in the hydrolysis of GTP during the formation of the 70S ribosomal complex. This is Translation initiation factor IF-2 from Paraburkholderia xenovorans (strain LB400).